Consider the following 151-residue polypeptide: Chaperonin GroEL (151 aa).

Residue 41-45 coordinates ATP; sequence DGTTT.

Belongs to the chaperonin (HSP60) family. Forms a cylinder of 14 subunits composed of two heptameric rings stacked back-to-back. Interacts with the co-chaperonin GroES.

Its subcellular location is the cytoplasm. The enzyme catalyses ATP + H2O + a folded polypeptide = ADP + phosphate + an unfolded polypeptide.. Functionally, together with its co-chaperonin GroES, plays an essential role in assisting protein folding. The GroEL-GroES system forms a nano-cage that allows encapsulation of the non-native substrate proteins and provides a physical environment optimized to promote and accelerate protein folding. This Mycolicibacterium fortuitum (Mycobacterium fortuitum) protein is Chaperonin GroEL.